A 553-amino-acid polypeptide reads, in one-letter code: Methionine--tRNA ligase (553 aa).

The 'HIGH' region signature appears at 12-22 (PYANSQLHLGH). Zn(2+)-binding residues include C144, C147, C157, and C160. Positions 332 to 336 (KFSKS) match the 'KMSKS' region motif. Position 335 (K335) interacts with ATP.

It belongs to the class-I aminoacyl-tRNA synthetase family. MetG type 1 subfamily. As to quaternary structure, monomer. Requires Zn(2+) as cofactor.

It localises to the cytoplasm. The catalysed reaction is tRNA(Met) + L-methionine + ATP = L-methionyl-tRNA(Met) + AMP + diphosphate. Is required not only for elongation of protein synthesis but also for the initiation of all mRNA translation through initiator tRNA(fMet) aminoacylation. This is Methionine--tRNA ligase from Dehalococcoides mccartyi (strain CBDB1).